Consider the following 293-residue polypeptide: Cytidine deaminase (293 aa).

CMP/dCMP-type deaminase domains follow at residues 47 to 166 and 186 to 293; these read DDRA…FGPA and VSDD…YQAV. Residue 88–90 participates in substrate binding; it reads NME. H101 lines the Zn(2+) pocket. E103 functions as the Proton donor in the catalytic mechanism. The Zn(2+) site is built by C128 and C131.

This sequence belongs to the cytidine and deoxycytidylate deaminase family. Homodimer. Requires Zn(2+) as cofactor.

It carries out the reaction cytidine + H2O + H(+) = uridine + NH4(+). It catalyses the reaction 2'-deoxycytidine + H2O + H(+) = 2'-deoxyuridine + NH4(+). Its function is as follows. This enzyme scavenges exogenous and endogenous cytidine and 2'-deoxycytidine for UMP synthesis. The protein is Cytidine deaminase of Aeromonas hydrophila subsp. hydrophila (strain ATCC 7966 / DSM 30187 / BCRC 13018 / CCUG 14551 / JCM 1027 / KCTC 2358 / NCIMB 9240 / NCTC 8049).